The sequence spans 585 residues: Optineurin (585 aa).

Residues 1-32 are disordered; sequence MSHQPLSCLTEKGDSSCETPGNGPSNMVHPNL. Polar residues predominate over residues 16 to 25; the sequence is SCETPGNGPS. Residues 38-181 are a coiled coil; that stretch reads EELLQQMKEL…VSELQLKLNS (144 aa). An interaction with Rab8 region spans residues 58 to 220; it reads MKLNNQAMKG…GPTRTDSISM (163 aa). The LIR signature appears at 187–192; that stretch reads DSFVEI. Residues S188 and S209 each carry the phosphoserine modification. Disordered regions lie at residues 200–220 and 269–299; these read EGAM…SISM and FEKK…PESV. Residues 244 to 512 are a coiled coil; sequence CLREGNQKVE…LLKENNDFED (269 aa). The residue at position 346 (S346) is a Phosphoserine. The tract at residues 415-585 is interaction with HD; it reads TKQQAEKVDK…LQIHVMDCII (171 aa). Residues 416–525 are interaction with MYO6; the sequence is KQQAEKVDKV…RQSLMEMQCR (110 aa). Positions 478–483 match the UBAN motif; that stretch reads DFHAER. S531 carries the post-translational modification Phosphoserine. The CCHC NOA-type zinc-finger motif lies at 555 to 585; it reads PRSIPIHSCPKCGEVLPDIDTLQIHVMDCII. C563, C566, H579, and C583 together coordinate Zn(2+).

In terms of assembly, self-associates. Interacts with HD. Interacts with GTF3A. Interacts with MYO6. Interacts (via UBAN) with ubiquitinated TFRC. Interacts with GTP-bound Rab8 (RAB8A and/or RAB8B). Interacts with TBC1D17. Interacts with TBK1. Interacts with TRAF3. Binds to linear ubiquitin chains. Interacts with LC3 family members MAP1LC3A, MAP1LC3B, GABARAP, GABARAPL1 and GABARAPL2; OPTN phosphorylation increases the association (at least with MAP1LC3B). Interacts with RAB12; the interaction may be indirect. Interacts with TBK1; this interaction leads to the Golgi localization of TBK1 and its subsequent activation. Interacts with palmitoyltransferase ZDHHC17/HIP14; the interaction does not lead to palmitoylation of OPTN. Interacts with CYLD. Interacts with TOM1; the interaction is indirect and is mediated by MYO6, which acts as a bridge between TOM1 and OPTN. Interacts with USP12; the interaction is independent of USP12 deubiquitinase activity and may be involved in regulation of autophagic flux. Post-translationally, phosphorylated by TBK1, leading to restrict bacterial proliferation in case of infection.

Its subcellular location is the cytoplasm. It localises to the perinuclear region. The protein resides in the golgi apparatus. It is found in the trans-Golgi network. The protein localises to the cytoplasmic vesicle. Its subcellular location is the autophagosome. It localises to the recycling endosome. Its function is as follows. Plays an important role in the maintenance of the Golgi complex, in membrane trafficking, in exocytosis, through its interaction with myosin VI and Rab8. Links myosin VI to the Golgi complex and plays an important role in Golgi ribbon formation. Negatively regulates the induction of IFNB in response to RNA virus infection. Plays a neuroprotective role in the eye and optic nerve. Probably part of the TNF-alpha signaling pathway that can shift the equilibrium toward induction of cell death. May act by regulating membrane trafficking and cellular morphogenesis via a complex that contains Rab8 and huntingtin (HD). Mediates the interaction of Rab8 with the probable GTPase-activating protein TBC1D17 during Rab8-mediated endocytic trafficking, such as that of transferrin receptor (TFRC/TfR); regulates Rab8 recruitment to tubules emanating from the endocytic recycling compartment. Autophagy receptor that interacts directly with both the cargo to become degraded and an autophagy modifier of the MAP1 LC3 family; targets ubiquitin-coated bacteria (xenophagy) and appears to function in the same pathway as SQSTM1 and CALCOCO2/NDP52. The chain is Optineurin (Optn) from Rattus norvegicus (Rat).